A 93-amino-acid chain; its full sequence is Mitochondrial import inner membrane translocase subunit Tim10-A (93 aa).

The Twin CX3C motif signature appears at 32–57 (CHKKCVPPHYKEAELSKGESVCLDRC). 2 disulfides stabilise this stretch: Cys32/Cys57 and Cys36/Cys53.

This sequence belongs to the small Tim family. In terms of assembly, heterohexamer; composed of 3 copies of TIMM9 and 3 copies of TIMM10/TIM10A, named soluble 70 kDa complex. The complex forms a 6-bladed alpha-propeller structure and associates with the TIMM22 component of the TIM22 complex. Interacts with multi-pass transmembrane proteins in transit.

The protein resides in the mitochondrion inner membrane. Mitochondrial intermembrane chaperone that participates in the import and insertion of multi-pass transmembrane proteins into the mitochondrial inner membrane. May also be required for the transfer of beta-barrel precursors from the TOM complex to the sorting and assembly machinery (SAM complex) of the outer membrane. Acts as a chaperone-like protein that protects the hydrophobic precursors from aggregation and guide them through the mitochondrial intermembrane space. This Xenopus laevis (African clawed frog) protein is Mitochondrial import inner membrane translocase subunit Tim10-A (timm10-a).